The primary structure comprises 52 residues: ATP synthase protein 8 (52 aa).

The helical transmembrane segment at 6–26 (PINGFVILCSISLMLLTLLIN) threads the bilayer.

Belongs to the ATPase protein 8 family. F-type ATPases have 2 components, CF(1) - the catalytic core - and CF(0) - the membrane proton channel.

The protein resides in the mitochondrion membrane. Functionally, mitochondrial membrane ATP synthase (F(1)F(0) ATP synthase or Complex V) produces ATP from ADP in the presence of a proton gradient across the membrane which is generated by electron transport complexes of the respiratory chain. F-type ATPases consist of two structural domains, F(1) - containing the extramembraneous catalytic core and F(0) - containing the membrane proton channel, linked together by a central stalk and a peripheral stalk. During catalysis, ATP synthesis in the catalytic domain of F(1) is coupled via a rotary mechanism of the central stalk subunits to proton translocation. Part of the complex F(0) domain. Minor subunit located with subunit a in the membrane. The protein is ATP synthase protein 8 (MT-ATP8) of Albinaria turrita (Door snail).